The following is a 152-amino-acid chain: MSFDLATCRQSALQLLSRRDHSEYELHQKLALKGHPTEVIDEVVKYVLELGYLSDARYAASQARQIVHKGYGEQRLRQQLKEKRVAEEVIEQALAEQTIDWFELAKEVAHKKFKSGISHERSQYAKQVRYLQYRGFNFEQIRYALQASESDE.

This sequence belongs to the RecX family.

The protein resides in the cytoplasm. Modulates RecA activity. This Vibrio cholerae serotype O1 (strain ATCC 39541 / Classical Ogawa 395 / O395) protein is Regulatory protein RecX.